Reading from the N-terminus, the 557-residue chain is Nucleoprotein (557 aa).

The binding site for the cap structure m7GTP stretch occupies residues 54–235 (MRKDKRSDDD…ITKEESANNI (182 aa)). Mn(2+) contacts are provided by Asp-379 and Glu-381. 4 residues coordinate Zn(2+): Glu-389, Cys-496, His-499, and Cys-518. A Mn(2+)-binding site is contributed by Asp-522.

Belongs to the arenaviridae nucleocapsid protein family. Homomultimerizes to form the nucleocapsid. Binds to viral genomic RNA. Interacts with glycoprotein G2. Interacts with protein Z; this interaction probably directs the encapsidated genome to budding sites. Interacts with protein L; this interaction does not interfere with Z-L interaction. Interacts with host IKBKE (via Protein kinase domain); the interaction inhibits IKBKE kinase activity.

It is found in the virion. The protein localises to the host cytoplasm. Functionally, encapsidates the genome, protecting it from nucleases. The encapsidated genomic RNA is termed the nucleocapsid (NC). Serves as template for viral transcription and replication. The increased presence of protein N in host cell does not seem to trigger the switch from transcription to replication as observed in other negative strain RNA viruses. Through the interaction with host IKBKE, strongly inhibits the phosphorylation and nuclear translocation of host IRF3, a protein involved in interferon activation pathway, leading to the inhibition of interferon-beta and IRF3-dependent promoters activation. Also encodes a functional 3'-5' exoribonuclease that degrades preferentially dsRNA substrates and thereby participates in the suppression of interferon induction. The protein is Nucleoprotein of Calomys callosus (Large vesper mouse).